An 80-amino-acid chain; its full sequence is ATP synthase subunit c (80 aa).

The next 2 helical transmembrane spans lie at 8 to 28 and 55 to 75; these read MIYF…AIGI and IVMG…LYLI.

This sequence belongs to the ATPase C chain family. F-type ATPases have 2 components, F(1) - the catalytic core - and F(0) - the membrane proton channel. F(1) has five subunits: alpha(3), beta(3), gamma(1), delta(1), epsilon(1). F(0) has three main subunits: a(1), b(2) and c(10-14). The alpha and beta chains form an alternating ring which encloses part of the gamma chain. F(1) is attached to F(0) by a central stalk formed by the gamma and epsilon chains, while a peripheral stalk is formed by the delta and b chains.

It is found in the cell inner membrane. In terms of biological role, f(1)F(0) ATP synthase produces ATP from ADP in the presence of a proton or sodium gradient. F-type ATPases consist of two structural domains, F(1) containing the extramembraneous catalytic core and F(0) containing the membrane proton channel, linked together by a central stalk and a peripheral stalk. During catalysis, ATP synthesis in the catalytic domain of F(1) is coupled via a rotary mechanism of the central stalk subunits to proton translocation. Its function is as follows. Key component of the F(0) channel; it plays a direct role in translocation across the membrane. A homomeric c-ring of between 10-14 subunits forms the central stalk rotor element with the F(1) delta and epsilon subunits. The chain is ATP synthase subunit c from Aeromonas salmonicida (strain A449).